The chain runs to 345 residues: Erythronate-4-phosphate dehydrogenase (345 aa).

Ser45 is a binding site for substrate. Residues Asp146 and Thr174 each coordinate NAD(+). Residue Arg207 is part of the active site. An NAD(+)-binding site is contributed by Asp227. Residue Glu232 is part of the active site. His249 functions as the Proton donor in the catalytic mechanism. Gly252 serves as a coordination point for NAD(+).

This sequence belongs to the D-isomer specific 2-hydroxyacid dehydrogenase family. PdxB subfamily. Homodimer.

The protein localises to the cytoplasm. The enzyme catalyses 4-phospho-D-erythronate + NAD(+) = (R)-3-hydroxy-2-oxo-4-phosphooxybutanoate + NADH + H(+). It participates in cofactor biosynthesis; pyridoxine 5'-phosphate biosynthesis; pyridoxine 5'-phosphate from D-erythrose 4-phosphate: step 2/5. Catalyzes the oxidation of erythronate-4-phosphate to 3-hydroxy-2-oxo-4-phosphonooxybutanoate. The chain is Erythronate-4-phosphate dehydrogenase from Ruthia magnifica subsp. Calyptogena magnifica.